The primary structure comprises 426 residues: Gamma-glutamyl phosphate reductase (426 aa).

It belongs to the gamma-glutamyl phosphate reductase family.

The protein resides in the cytoplasm. The enzyme catalyses L-glutamate 5-semialdehyde + phosphate + NADP(+) = L-glutamyl 5-phosphate + NADPH + H(+). The protein operates within amino-acid biosynthesis; L-proline biosynthesis; L-glutamate 5-semialdehyde from L-glutamate: step 2/2. In terms of biological role, catalyzes the NADPH-dependent reduction of L-glutamate 5-phosphate into L-glutamate 5-semialdehyde and phosphate. The product spontaneously undergoes cyclization to form 1-pyrroline-5-carboxylate. The sequence is that of Gamma-glutamyl phosphate reductase from Cupriavidus taiwanensis (strain DSM 17343 / BCRC 17206 / CCUG 44338 / CIP 107171 / LMG 19424 / R1) (Ralstonia taiwanensis (strain LMG 19424)).